The sequence spans 210 residues: Uracil phosphoribosyltransferase (210 aa).

5-phospho-alpha-D-ribose 1-diphosphate-binding positions include Arg-78, Arg-103, and 130–138 (DPMLATGGS). Residues Ile-193 and 198–200 (GDA) contribute to the uracil site. Asp-199 serves as a coordination point for 5-phospho-alpha-D-ribose 1-diphosphate.

The protein belongs to the UPRTase family. Mg(2+) serves as cofactor.

The catalysed reaction is UMP + diphosphate = 5-phospho-alpha-D-ribose 1-diphosphate + uracil. Its pathway is pyrimidine metabolism; UMP biosynthesis via salvage pathway; UMP from uracil: step 1/1. Its activity is regulated as follows. Allosterically activated by GTP. Functionally, catalyzes the conversion of uracil and 5-phospho-alpha-D-ribose 1-diphosphate (PRPP) to UMP and diphosphate. In Laribacter hongkongensis (strain HLHK9), this protein is Uracil phosphoribosyltransferase.